The sequence spans 206 residues: MCKWKIQFLDFCLEKKVLKFGKFQLKSGKCSPYYFNSGLFNTGNDLQKLGYFYAKTIIESNLDYKAIFGVAYKGIPIVISTAIALRKYFNINIPYCFNRKELKKHGEKGNFIGQKLTGKIILLDDVMTSGFSINDTINFIHSHANTKISGIIIALDRTRNINNKKNIQKNIEKKYNLKIFSIISILDIINYFKKKKHLHIYLKYII.

5-phospho-alpha-D-ribose 1-diphosphate is bound by residues K26, 72 to 73, R99, K100, K103, H105, and 124 to 132; these read YK and DDVMTSGFS. Residues T128 and R157 each coordinate orotate.

Belongs to the purine/pyrimidine phosphoribosyltransferase family. PyrE subfamily. In terms of assembly, homodimer. Mg(2+) serves as cofactor.

It carries out the reaction orotidine 5'-phosphate + diphosphate = orotate + 5-phospho-alpha-D-ribose 1-diphosphate. It participates in pyrimidine metabolism; UMP biosynthesis via de novo pathway; UMP from orotate: step 1/2. In terms of biological role, catalyzes the transfer of a ribosyl phosphate group from 5-phosphoribose 1-diphosphate to orotate, leading to the formation of orotidine monophosphate (OMP). The protein is Orotate phosphoribosyltransferase of Buchnera aphidicola subsp. Baizongia pistaciae (strain Bp).